Consider the following 150-residue polypeptide: Ribosome maturation factor RimP (150 aa).

Belongs to the RimP family.

The protein localises to the cytoplasm. Required for maturation of 30S ribosomal subunits. The chain is Ribosome maturation factor RimP from Acaryochloris marina (strain MBIC 11017).